The sequence spans 442 residues: Probable glycine dehydrogenase (decarboxylating) subunit 1 (442 aa).

It belongs to the GcvP family. N-terminal subunit subfamily. The glycine cleavage system is composed of four proteins: P, T, L and H. In this organism, the P 'protein' is a heterodimer of two subunits.

It carries out the reaction N(6)-[(R)-lipoyl]-L-lysyl-[glycine-cleavage complex H protein] + glycine + H(+) = N(6)-[(R)-S(8)-aminomethyldihydrolipoyl]-L-lysyl-[glycine-cleavage complex H protein] + CO2. Functionally, the glycine cleavage system catalyzes the degradation of glycine. The P protein binds the alpha-amino group of glycine through its pyridoxal phosphate cofactor; CO(2) is released and the remaining methylamine moiety is then transferred to the lipoamide cofactor of the H protein. This Geotalea uraniireducens (strain Rf4) (Geobacter uraniireducens) protein is Probable glycine dehydrogenase (decarboxylating) subunit 1.